The chain runs to 264 residues: Thymidylate synthase (264 aa).

R21 serves as a coordination point for dUMP. H51 provides a ligand contact to (6R)-5,10-methylene-5,6,7,8-tetrahydrofolate. 126–127 (RR) lines the dUMP pocket. C146 (nucleophile) is an active-site residue. Residues 166-169 (RSCD), N177, and 207-209 (HLY) contribute to the dUMP site. D169 is a (6R)-5,10-methylene-5,6,7,8-tetrahydrofolate binding site. A263 is a (6R)-5,10-methylene-5,6,7,8-tetrahydrofolate binding site.

The protein belongs to the thymidylate synthase family. Bacterial-type ThyA subfamily. In terms of assembly, homodimer.

The protein localises to the cytoplasm. It carries out the reaction dUMP + (6R)-5,10-methylene-5,6,7,8-tetrahydrofolate = 7,8-dihydrofolate + dTMP. Its pathway is pyrimidine metabolism; dTTP biosynthesis. In terms of biological role, catalyzes the reductive methylation of 2'-deoxyuridine-5'-monophosphate (dUMP) to 2'-deoxythymidine-5'-monophosphate (dTMP) while utilizing 5,10-methylenetetrahydrofolate (mTHF) as the methyl donor and reductant in the reaction, yielding dihydrofolate (DHF) as a by-product. This enzymatic reaction provides an intracellular de novo source of dTMP, an essential precursor for DNA biosynthesis. This chain is Thymidylate synthase, found in Pectobacterium atrosepticum (strain SCRI 1043 / ATCC BAA-672) (Erwinia carotovora subsp. atroseptica).